Reading from the N-terminus, the 1305-residue chain is Contactin-associated protein-like 5 (1305 aa).

The signal sequence occupies residues 1–24 (MDSVPRLTGVFTLLLSGLWHLGSS). Residues 25 to 1236 (ATNYNCDDPL…PLTNAVRSDS (1212 aa)) lie on the Extracellular side of the membrane. Positions 30 to 174 (CDDPLASLLS…IGMRVEVYGC (145 aa)) constitute an F5/8 type C domain. An intrachain disulfide couples C30 to C174. 2 Laminin G-like domains span residues 180-360 (VADF…TFSC) and 367-544 (PITF…IDLC). N-linked (GlcNAc...) asparagine glycosylation is found at N282, N355, and N496. A disulfide bridge links C329 with C360. 4 disulfide bridges follow: C512–C544, C550–C561, C555–C570, and C572–C582. The 38-residue stretch at 546–583 (IKDRCLPNYCEHGGFCSQSWTTFYCNCSNTGYTGATCH) folds into the EGF-like 1 domain. Residues 584 to 790 (NSLYEQSCEV…LRCYGDRHFW (207 aa)) form the Fibrinogen C-terminal domain. N-linked (GlcNAc...) asparagine glycosylation occurs at N622. The Laminin G-like 3 domain maps to 791-956 (NAVSFYTEAS…KVTSGVRPGC (166 aa)). Cystine bridges form between C929–C956, C960–C973, C967–C982, C984–C994, and C1163–C1198. The 39-residue stretch at 957–995 (PGHCSTYGSICHNGGKCVEKYSGYFCDCTNSPYEGPFCK) folds into the EGF-like 2 domain. One can recognise a Laminin G-like 4 domain in the interval 1000–1198 (AVFEAGTSVT…VQGTLMESSC (199 aa)). A helical membrane pass occupies residues 1237 to 1257 (AVIGGVIAVVIFIIFSIIGIM). Residues 1258–1305 (TRFLYQHKQSHRTNQMKEKEYPENLDSSFRNDIDLQNTVSECKREYFI) are Cytoplasmic-facing.

Belongs to the neurexin family.

The protein localises to the membrane. Functionally, may play a role in the correct development and proper functioning of the peripheral and central nervous system and be involved in cell adhesion and intercellular communication. The sequence is that of Contactin-associated protein-like 5 (CNTNAP5) from Canis lupus familiaris (Dog).